A 144-amino-acid chain; its full sequence is D-aminoacyl-tRNA deacylase (144 aa).

Positions 136–137 (GP) match the Gly-cisPro motif, important for rejection of L-amino acids motif.

It belongs to the DTD family. As to quaternary structure, homodimer.

It is found in the cytoplasm. It catalyses the reaction glycyl-tRNA(Ala) + H2O = tRNA(Ala) + glycine + H(+). The enzyme catalyses a D-aminoacyl-tRNA + H2O = a tRNA + a D-alpha-amino acid + H(+). In terms of biological role, an aminoacyl-tRNA editing enzyme that deacylates mischarged D-aminoacyl-tRNAs. Also deacylates mischarged glycyl-tRNA(Ala), protecting cells against glycine mischarging by AlaRS. Acts via tRNA-based rather than protein-based catalysis; rejects L-amino acids rather than detecting D-amino acids in the active site. By recycling D-aminoacyl-tRNA to D-amino acids and free tRNA molecules, this enzyme counteracts the toxicity associated with the formation of D-aminoacyl-tRNA entities in vivo and helps enforce protein L-homochirality. The chain is D-aminoacyl-tRNA deacylase from Haemophilus influenzae (strain 86-028NP).